We begin with the raw amino-acid sequence, 649 residues long: 1-deoxy-D-xylulose-5-phosphate synthase (649 aa).

Residues H84 and G125–S127 each bind thiamine diphosphate. Residue D156 coordinates Mg(2+). Residues G157–S158, N185, F292, and E385 contribute to the thiamine diphosphate site. N185 lines the Mg(2+) pocket.

Belongs to the transketolase family. DXPS subfamily. As to quaternary structure, homodimer. It depends on Mg(2+) as a cofactor. Thiamine diphosphate serves as cofactor.

It catalyses the reaction D-glyceraldehyde 3-phosphate + pyruvate + H(+) = 1-deoxy-D-xylulose 5-phosphate + CO2. It participates in metabolic intermediate biosynthesis; 1-deoxy-D-xylulose 5-phosphate biosynthesis; 1-deoxy-D-xylulose 5-phosphate from D-glyceraldehyde 3-phosphate and pyruvate: step 1/1. In terms of biological role, catalyzes the acyloin condensation reaction between C atoms 2 and 3 of pyruvate and glyceraldehyde 3-phosphate to yield 1-deoxy-D-xylulose-5-phosphate (DXP). The polypeptide is 1-deoxy-D-xylulose-5-phosphate synthase (Saccharophagus degradans (strain 2-40 / ATCC 43961 / DSM 17024)).